Reading from the N-terminus, the 137-residue chain is Large ribosomal subunit protein uL16 (137 aa).

The protein belongs to the universal ribosomal protein uL16 family. As to quaternary structure, part of the 50S ribosomal subunit.

Functionally, binds 23S rRNA and is also seen to make contacts with the A and possibly P site tRNAs. In Bartonella tribocorum (strain CIP 105476 / IBS 506), this protein is Large ribosomal subunit protein uL16.